The primary structure comprises 847 residues: Protein SEY1 (847 aa).

Residues 1–720 lie on the Cytoplasmic side of the membrane; sequence MSSGEPLSET…KRSIVQHVTQ (720 aa). One can recognise a GB1/RHD3-type G domain in the interval 55–290; sequence GHNYHIVAVF…VENDIFKPEY (236 aa). 65–72 is a GTP binding site; sequence GSQSTGKS. The helical transmembrane segment at 721 to 741 threads the bilayer; that stretch reads IPYYIYIIILLLGWNEFMAVV. Topologically, residues 742 to 744 are lumenal; that stretch reads RNP. Residues 745 to 765 traverse the membrane as a helical segment; that stretch reads FTFSLAIILGASLYILYTMNL. The Cytoplasmic segment spans residues 766-847; the sequence is LKPALTVTQR…VTSLNVVEEE (82 aa).

The protein belongs to the TRAFAC class dynamin-like GTPase superfamily. GB1/RHD3 GTPase family. RHD3 subfamily.

The protein resides in the endoplasmic reticulum membrane. In terms of biological role, cooperates with the reticulon proteins and tubule-shaping DP1 family proteins to generate and maintain the structure of the tubular endoplasmic reticulum network. Has GTPase activity, which is required for its function in ER organization. This is Protein SEY1 from Lodderomyces elongisporus (strain ATCC 11503 / CBS 2605 / JCM 1781 / NBRC 1676 / NRRL YB-4239) (Yeast).